A 470-amino-acid chain; its full sequence is Sorting nexin-17 (470 aa).

A PX domain is found at 1–109 (MHFSIPETES…SFLRRAQQET (109 aa)). Residues arginine 36, serine 38, lysine 62, and arginine 75 each contribute to the a 1,2-diacyl-sn-glycero-3-phospho-(1D-myo-inositol-3-phosphate) site. Residues 115–206 (EEVSLEVLLS…YKIVLRKSYW (92 aa)) form the Ras-associating domain. Residues 115–432 (EEVSLEVLLS…DATRESMVKL (318 aa)) are FERM-like. The interval 270–432 (GYLRFDACVA…DATRESMVKL (163 aa)) is PTB-like F3 module. Phosphoserine occurs at positions 336, 407, 409, 415, 421, 437, and 440. Residues 400 to 425 (VGGTLRRSDSQQAVKSPPLLESPDAT) are disordered.

The protein belongs to the sorting nexin family. In terms of assembly, monomer. Interacts with APP (via cytoplasmic YXNPXY motif). Interacts with KIF1B. Interacts with the C-termini of P-selectin, PTC, LDLR, VLDLR, LRP1 and LRP8. Interacts with KRIT1 (via N-terminus). Interacts with HRAS. Interacts with ITGB1 and ITGB5 (via NPxY motif). Interacts with CCDC22 and CCDC93; the interaction associates SNX17 with the CCC complex. Interacts (via C-terminus) with VPS26C and VPS35L; the interactions are direct and associate SNX17 with the retriever complex.

It is found in the cytoplasm. It localises to the early endosome. The protein resides in the cytoplasmic vesicle membrane. Its function is as follows. Critical regulator of endosomal recycling of numerous surface proteins, including integrins, signaling receptor and channels. Binds to NPxY sequences in the cytoplasmic tails of target cargos. Associates with retriever and CCC complexes to prevent lysosomal degradation and promote cell surface recycling of numerous cargos such as integrins ITGB1, ITGB5 and their associated alpha subunits. Also required for maintenance of normal cell surface levels of APP and LRP1. Interacts with membranes containing phosphatidylinositol 3-phosphate (PtdIns(3P)). The chain is Sorting nexin-17 (SNX17) from Pongo abelii (Sumatran orangutan).